Consider the following 333-residue polypeptide: CMP-N-acetylneuraminate-beta-galactosamide-alpha-2,3-sialyltransferase 4 (333 aa).

At 1–8 (MTSKSHWK) the chain is on the cytoplasmic side. The helical; Signal-anchor for type II membrane protein transmembrane segment at 9 to 26 (LLALALVLVVVMVWYSIS) threads the bilayer. Residues 27 to 333 (REDRYIEFFY…MGAVKNLTYF (307 aa)) are Lumenal-facing. Residues Asn61, Asn131, Asn310, and Asn329 are each glycosylated (N-linked (GlcNAc...) asparagine). A disulfide bond links Cys120 and Cys273.

The protein belongs to the glycosyltransferase 29 family.

It is found in the golgi apparatus. The protein resides in the golgi stack membrane. The catalysed reaction is a beta-D-galactosyl-(1-&gt;3)-N-acetyl-beta-D-galactosaminyl derivative + CMP-N-acetyl-beta-neuraminate = an N-acetyl-alpha-neuraminyl-(2-&gt;3)-beta-D-galactosyl-(1-&gt;3)-N-acetyl-beta-D-galactosaminyl derivative + CMP + H(+). It carries out the reaction a beta-D-galactosyl-(1-&gt;3)-N-acetyl-alpha-D-galactosaminyl derivative + CMP-N-acetyl-beta-neuraminate = an N-acetyl-alpha-neuraminyl-(2-&gt;3)-beta-D-galactosyl-(1-&gt;3)-N-acetyl-alpha-D-galactosaminyl derivative + CMP + H(+). The enzyme catalyses a beta-D-galactosyl-(1-&gt;4)-N-acetyl-beta-D-glucosaminyl derivative + CMP-N-acetyl-beta-neuraminate = an N-acetyl-alpha-neuraminyl-(2-&gt;3)-beta-D-galactosyl-(1-&gt;4)-N-acetyl-beta-D-glucosaminyl derivative + CMP + H(+). It catalyses the reaction a ganglioside GM1 (d18:1(4E)) + CMP-N-acetyl-beta-neuraminate = a ganglioside GD1a (d18:1(4E)) + CMP + H(+). The catalysed reaction is a ganglioside GA1 (d18:1(4E)) + CMP-N-acetyl-beta-neuraminate = a ganglioside GM1b (d18:1(4E)) + CMP + H(+). It carries out the reaction a ganglioside GT1c (d18:1(4E)) + CMP-N-acetyl-beta-neuraminate = a ganglioside GQ1c (d18:1(4E)) + CMP + H(+). The enzyme catalyses a neolactoside nLc4Cer + CMP-N-acetyl-beta-neuraminate = a neolactoside IV(3)-alpha-NeuAc-nLc4Cer + CMP + H(+). It catalyses the reaction a neolactoside nLc4Cer(d18:1(4E)) + CMP-N-acetyl-beta-neuraminate = a neolactoside IV(3)-alpha-NeuAc-nLc4Cer(d18:1(4E)) + CMP + H(+). It participates in protein modification; protein glycosylation. Its pathway is glycolipid biosynthesis. A beta-galactoside alpha2-3 sialyltransferase involved in terminal sialylation of glycoproteins and glycolipids. Catalyzes the transfer of sialic acid (N-acetyl-neuraminic acid; Neu5Ac) from the nucleotide sugar donor CMP-Neu5Ac onto acceptor Galbeta-(1-&gt;3)-GalNAc- and Galbeta-(1-&gt;4)-GlcNAc-terminated glycoconjugates through an alpha2-3 linkage. Plays a major role in hemostasis. Responsible for sialylation of plasma VWF/von Willebrand factor, preventing its recognition by asialoglycoprotein receptors (ASGPR) and subsequent clearance. Regulates ASGPR-mediated clearance of platelets. Participates in the biosynthesis of the sialyl Lewis X epitopes, both on O- and N-glycans, which are recognized by SELE/E-selectin, SELP/P-selectin and SELL/L-selectin. Essential for selectin-mediated rolling and adhesion of leukocytes during extravasation. Contributes to adhesion and transendothelial migration of neutrophils likely through terminal sialylation of CXCR2. In glycosphingolipid biosynthesis, sialylates GM1 and GA1 gangliosides to form GD1a and GM1b, respectively. Metabolizes brain c-series ganglioside GT1c forming GQ1c. Synthesizes ganglioside LM1 (IV3Neu5Ac-nLc4Cer), a major structural component of peripheral nerve myelin. The chain is CMP-N-acetylneuraminate-beta-galactosamide-alpha-2,3-sialyltransferase 4 (St3gal4) from Rattus norvegicus (Rat).